The primary structure comprises 73 residues: Putative sodium channel toxin Ts39 (73 aa).

Positions 1–22 are cleaved as a signal peptide; that stretch reads MKTLNFCLFLVIISSLTVRVFC. One can recognise an LCN-type CS-alpha/beta domain in the interval 24-73; the sequence is NDRFLTVNDNYVICLYINKSFVNCENLCKAYMNAKDGFCRQPHCFCTDVE. Intrachain disulfides connect Cys37–Cys62, Cys47–Cys67, and Cys51–Cys69.

This sequence belongs to the long (3 C-C) scorpion toxin superfamily. Sodium channel inhibitor family. In terms of tissue distribution, expressed by the venom gland.

The protein localises to the secreted. Putative sodium channel toxin. The chain is Putative sodium channel toxin Ts39 from Tityus serrulatus (Brazilian scorpion).